A 110-amino-acid chain; its full sequence is Replication initiation control protein YabA (110 aa).

Zn(2+)-binding residues include His84, Cys86, Cys100, and Cys103.

It belongs to the YabA family. In terms of assembly, homotetramer. Interacts with both DnaA and DnaN, acting as a bridge between these two proteins. The cofactor is Zn(2+).

It localises to the cytoplasm. It is found in the nucleoid. Involved in control of chromosome replication initiation. Inhibits the cooperative binding of DnaA to the oriC region, thus negatively regulating initiation of chromosome replication. Inhibits the ability of DnaA-ATP to form a helix on DNA; does not disassemble preformed DnaA-DNA helices. Decreases the residence time of DnaA on the chromosome at its binding sites (oriC, replication forks and promoter-binding sites). Tethers DnaA to the replication machinery via the DNA polymerase beta sliding clamp subunit (dnaN). Associates with oriC and other DnaA targets on the chromosome in a DnaA-dependent manner. The chain is Replication initiation control protein YabA from Streptococcus mutans serotype c (strain ATCC 700610 / UA159).